Reading from the N-terminus, the 208-residue chain is NAD(P)H-hydrate epimerase (208 aa).

The YjeF N-terminal domain occupies 11–208 (MRAKDQFTIN…VIVADDMGTY (198 aa)). Residue 59-63 (NNGGD) participates in (6S)-NADPHX binding. K(+)-binding residues include N60 and D122. (6S)-NADPHX-binding positions include 126-132 (GIGIDRP), Y137, and D155. A K(+)-binding site is contributed by S158.

This sequence belongs to the NnrE/AIBP family. It depends on K(+) as a cofactor.

The enzyme catalyses (6R)-NADHX = (6S)-NADHX. It catalyses the reaction (6R)-NADPHX = (6S)-NADPHX. Its function is as follows. Catalyzes the epimerization of the S- and R-forms of NAD(P)HX, a damaged form of NAD(P)H that is a result of enzymatic or heat-dependent hydration. This is a prerequisite for the S-specific NAD(P)H-hydrate dehydratase to allow the repair of both epimers of NAD(P)HX. This is NAD(P)H-hydrate epimerase from Limosilactobacillus fermentum (strain NBRC 3956 / LMG 18251) (Lactobacillus fermentum).